A 276-amino-acid chain; its full sequence is Phosphatidylcholine synthase (276 aa).

Residues 1–30 (MGGQKEMADSVKTKLTGKLKAKKVTAPQAK) are Cytoplasmic-facing. A helical transmembrane segment spans residues 31–51 (AFSVHLLTASGSFLAFLSVVA). Residues 52-57 (ASDGRY) lie on the Periplasmic side of the membrane. A helical membrane pass occupies residues 58 to 78 (TAMWWWLGLALFVDGIDGPIA). Residues 79–91 (RKLEVKYVLPNWS) are Cytoplasmic-facing. A helical transmembrane segment spans residues 92 to 112 (GELLDSIIDYVTYVLIPAFAL). Residues 113–115 (YQS) are Periplasmic-facing. A helical membrane pass occupies residues 116–136 (GFMGTNLSFISGAIIVVSSAI). Topologically, residues 137-146 (YYADTGMKTK) are cytoplasmic. Residues 147–167 (ENFFKGFPVVWNMVVFTLFIV) traverse the membrane as a helical segment. The Periplasmic portion of the chain corresponds to 168–171 (RPGE). The chain crosses the membrane as a helical span at residues 172-192 (WVAFGTVVASAILSFLPINFL). At 193 to 202 (HPVRVVRLRP) the chain is on the cytoplasmic side. The helical transmembrane segment at 203-223 (LNLTIFLLWCAFGVIALYYML) threads the bilayer. Over 224-230 (DAPLWVR) the chain is Periplasmic. A helical membrane pass occupies residues 231-251 (IGISVTGLYIYFIGAIMQLFP). Over 252–276 (SLGREAALAKARKLVEKQQKSGEAP) the chain is Cytoplasmic.

Belongs to the CDP-alcohol phosphatidyltransferase class-I family. Requires Mn(2+) as cofactor.

It localises to the cell inner membrane. It catalyses the reaction a CDP-1,2-diacyl-sn-glycerol + choline = a 1,2-diacyl-sn-glycero-3-phosphocholine + CMP + H(+). Functionally, condenses choline with CDP-diglyceride to produce phosphatidylcholine and CMP. The sequence is that of Phosphatidylcholine synthase from Brucella melitensis biotype 1 (strain ATCC 23456 / CCUG 17765 / NCTC 10094 / 16M).